Consider the following 542-residue polypeptide: uncharacterized protein (542 aa).

Helical transmembrane passes span 4-23 (ILRD…GYPL), 28-47 (IGGI…AFGA), 57-79 (IVYQ…HGFL), 86-108 (GVIY…LIPH), and 151-173 (PVVG…IYLA). 2 RCK C-terminal domains span residues 186–270 (RTLK…VIGC) and 273–356 (EVQA…LGDS). A run of 6 helical transmembrane segments spans residues 365–384 (IAVL…VPIP), 389–408 (ITVR…FLGA), 415–437 (LVWV…IFLA), 457–479 (WAIL…YVGY), 484–506 (IPMG…LGFA), and 519–541 (YAMV…IAVL).

It belongs to the AAE transporter (TC 2.A.81) family.

The protein localises to the cell membrane. This is an uncharacterized protein from Symbiobacterium thermophilum (strain DSM 24528 / JCM 14929 / IAM 14863 / T).